The sequence spans 294 residues: BOI-related E3 ubiquitin-protein ligase 1 (294 aa).

Residues 168–204 are WRD domain; it reads LQERVKNLYVENQIWRDLAQTNEATANNLRSNLEQVL. A coiled-coil region spans residues 183-212; the sequence is RDLAQTNEATANNLRSNLEQVLAQVDDLDA. The segment at 244–281 adopts an RING-type zinc-finger fold; that stretch reads CKRCGELTASVLVLPCRHLCLCTVCGSSALLRTCPVCD.

In terms of assembly, interacts with the DELLA proteins GAI, RGA, RGL1, RGL2 and RGL3.

The enzyme catalyses S-ubiquitinyl-[E2 ubiquitin-conjugating enzyme]-L-cysteine + [acceptor protein]-L-lysine = [E2 ubiquitin-conjugating enzyme]-L-cysteine + N(6)-ubiquitinyl-[acceptor protein]-L-lysine.. It participates in protein degradation; proteasomal ubiquitin-dependent pathway. Its function is as follows. E3 ubiquitin-protein ligase involved in regulation of abiotic stress responses. Not involved in ubiquitination of MYB108/BOS1. Has no effect on the stability of the DELLA proteins. The chain is BOI-related E3 ubiquitin-protein ligase 1 (BRG1) from Arabidopsis thaliana (Mouse-ear cress).